A 445-amino-acid chain; its full sequence is Phosphoglucosamine mutase (445 aa).

Residue Ser-102 is the Phosphoserine intermediate of the active site. Mg(2+) contacts are provided by Ser-102, Asp-241, Asp-243, and Asp-245. Ser-102 carries the post-translational modification Phosphoserine.

This sequence belongs to the phosphohexose mutase family. Requires Mg(2+) as cofactor. In terms of processing, activated by phosphorylation.

It catalyses the reaction alpha-D-glucosamine 1-phosphate = D-glucosamine 6-phosphate. In terms of biological role, catalyzes the conversion of glucosamine-6-phosphate to glucosamine-1-phosphate. The protein is Phosphoglucosamine mutase of Shewanella baltica (strain OS155 / ATCC BAA-1091).